A 458-amino-acid polypeptide reads, in one-letter code: MNTTPSAHETIHEVIVIGSGPAGYTAALYAARAQLTPLVFEGTSFGGALMTTTEVENYPGFRNGITGPELMDDMREQALRFGAELRTEDVESVSLRGPIKSVVTAEGQTYQARAVILAMGTSVRYLQIPGEQELLGRGVSACATCDGSFFRGQDIAVIGGGDSAMEEALFLTRFARSVTLVHRRDEFRASKIMLGRARNNDKIKFITNHTVVAVNGYTTVTGLRLRNTTTGEETTLVVTGVFVAIGHEPRSSLVSDVVDIDPDGYVLVKGRTTSTSMDGVFAAGDLVDRTYRQAITAAGSGCAAAIDAERWLAEHAGSKANETTEETGDVDSTDTTDWSTAMTDAKNAGVTIEVTDASFFADVLSSNKPVLVDFWATWCGPCKMVAPVLEEIASEQRNQLTVAKLDVDTNPEMAREFQVVSIPTMILFQGGQPVKRIVGAKGKAALLRDLSDVVPNLN.

The tract at residues 1 to 321 (MNTTPSAHET…LAEHAGSKAN (321 aa)) is thioredoxin reductase. Residues 19 to 22 (SGPA), 41 to 48 (EGTSFGGA), Asn57, and Val90 contribute to the FAD site. An intrachain disulfide couples Cys142 to Cys145. Positions 163, 182, 188, 245, and 265 each coordinate NADP(+). Residues Asp285 and 292–295 (RQAI) contribute to the FAD site. NADP(+) is bound at residue Arg292. A linker region spans residues 322–347 (ETTEETGDVDSTDTTDWSTAMTDAKN). The region spanning 341–455 (AMTDAKNAGV…LLRDLSDVVP (115 aa)) is the Thioredoxin domain. Cys379 and Cys382 form a disulfide bridge.

This sequence in the N-terminal section; belongs to the class-II pyridine nucleotide-disulfide oxidoreductase family. In terms of assembly, homodimer. FAD serves as cofactor.

Its subcellular location is the cytoplasm. The enzyme catalyses [thioredoxin]-dithiol + NADP(+) = [thioredoxin]-disulfide + NADPH + H(+). This chain is Bifunctional thioredoxin reductase/thioredoxin (trxB/A), found in Mycobacterium leprae (strain TN).